Here is a 272-residue protein sequence, read N- to C-terminus: Energy-coupling factor transporter ATP-binding protein EcfA1 (272 aa).

The 236-residue stretch at 2–237 (IKVSDVCFSY…KNIIEKAKID (236 aa)) folds into the ABC transporter domain. Position 37 to 44 (37 to 44 (GHNGSGKS)) interacts with ATP.

This sequence belongs to the ABC transporter superfamily. Energy-coupling factor EcfA family. As to quaternary structure, forms a stable energy-coupling factor (ECF) transporter complex composed of 2 membrane-embedded substrate-binding proteins (S component), 2 ATP-binding proteins (A component) and 2 transmembrane proteins (T component).

It is found in the cell membrane. Functionally, ATP-binding (A) component of a common energy-coupling factor (ECF) ABC-transporter complex. Unlike classic ABC transporters this ECF transporter provides the energy necessary to transport a number of different substrates. The sequence is that of Energy-coupling factor transporter ATP-binding protein EcfA1 from Mesomycoplasma hyopneumoniae (strain J / ATCC 25934 / NCTC 10110) (Mycoplasma hyopneumoniae).